Reading from the N-terminus, the 459-residue chain is Cysteine--tRNA ligase (459 aa).

Zn(2+) is bound at residue C31. Positions P33–N43 match the 'HIGH' region motif. Residues C216, H241, and E245 each contribute to the Zn(2+) site. Positions K274–S278 match the 'KMSKS' region motif. K277 contacts ATP.

This sequence belongs to the class-I aminoacyl-tRNA synthetase family. Monomer. Requires Zn(2+) as cofactor.

It localises to the cytoplasm. The catalysed reaction is tRNA(Cys) + L-cysteine + ATP = L-cysteinyl-tRNA(Cys) + AMP + diphosphate. The sequence is that of Cysteine--tRNA ligase from Rickettsia felis (strain ATCC VR-1525 / URRWXCal2) (Rickettsia azadi).